The chain runs to 363 residues: Adenylate cyclase 2 (363 aa).

The 130-residue stretch at 157–286 (VFLFIDLAGS…DTVNTTARLE (130 aa)) folds into the Guanylate cyclase domain. Residues D162 and D206 each contribute to the Mg(2+) site. Positions 341–363 (GDGATEPAGETVRSPAAEAFTSL) are disordered.

This sequence belongs to the adenylyl cyclase class-3 family. Requires Mg(2+) as cofactor.

The enzyme catalyses ATP = 3',5'-cyclic AMP + diphosphate. Functionally, plays essential roles in regulation of cellular metabolism by catalyzing the synthesis of a second messenger, cAMP. This is Adenylate cyclase 2 (cya2) from Rhizobium meliloti (strain 1021) (Ensifer meliloti).